We begin with the raw amino-acid sequence, 108 residues long: Class I hydrophobin 3 (108 aa).

An N-terminal signal peptide occupies residues 1–17 (MFFQTTIVAALASLAVA). Cystine bridges form between Cys28/Cys87, Cys35/Cys81, Cys36/Cys69, and Cys88/Cys101. Residue Asn37 is glycosylated (N-linked (GlcNAc...) asparagine).

This sequence belongs to the fungal hydrophobin family. As to quaternary structure, self-assembles to form functional amyloid fibrils called rodlets. Self-assembly into fibrillar rodlets occurs spontaneously at hydrophobic:hydrophilic interfaces and the rodlets further associate laterally to form amphipathic monolayers.

Its subcellular location is the secreted. The protein localises to the cell wall. Its function is as follows. Aerial growth, conidiation, and dispersal of filamentous fungi in the environment rely upon a capability of their secreting small amphipathic proteins called hydrophobins (HPBs) with low sequence identity. Class I can self-assemble into an outermost layer of rodlet bundles on aerial cell surfaces, conferring cellular hydrophobicity that supports fungal growth, development and dispersal; whereas Class II form highly ordered films at water-air interfaces through intermolecular interactions but contribute nothing to the rodlet structure. Vmh3 is a class I hydrophobin that is essential for the maintenance of the surface hydrophobicity of the mycelium and might be involved in the development of fruiting bodies. Plays an important role in hyphal resistance against environmental stress. Necessary for the efficient biodegradation of lignin. The polypeptide is Class I hydrophobin 3 (Pleurotus ostreatus (strain PC15) (Oyster mushroom)).